The sequence spans 124 residues: Small ribosomal subunit protein uS12 (124 aa).

A disordered region spans residues M1–P22. The residue at position 89 (D89) is a 3-methylthioaspartic acid. The disordered stretch occupies residues T104–S124. The span at G113–S124 shows a compositional bias: basic residues.

Belongs to the universal ribosomal protein uS12 family. As to quaternary structure, part of the 30S ribosomal subunit. Contacts proteins S8 and S17. May interact with IF1 in the 30S initiation complex.

With S4 and S5 plays an important role in translational accuracy. In terms of biological role, interacts with and stabilizes bases of the 16S rRNA that are involved in tRNA selection in the A site and with the mRNA backbone. Located at the interface of the 30S and 50S subunits, it traverses the body of the 30S subunit contacting proteins on the other side and probably holding the rRNA structure together. The combined cluster of proteins S8, S12 and S17 appears to hold together the shoulder and platform of the 30S subunit. The chain is Small ribosomal subunit protein uS12 from Hahella chejuensis (strain KCTC 2396).